A 126-amino-acid chain; its full sequence is Protein ApaG (126 aa).

The region spanning S2–H126 is the ApaG domain.

This chain is Protein ApaG, found in Pseudomonas entomophila (strain L48).